The sequence spans 266 residues: RNA polymerase II subunit A C-terminal domain phosphatase ssu-72 (266 aa).

Positions 1–31 (MSAVDTPTGAASSSKPDQNEQNGQNGGREDS) are disordered. A compositionally biased stretch (polar residues) spans 9–23 (GAASSSKPDQNEQNG).

It belongs to the SSU72 phosphatase family. In terms of assembly, component of the cleavage and polyadenylation factor (CPF) complex.

It localises to the nucleus. It carries out the reaction O-phospho-L-seryl-[protein] + H2O = L-seryl-[protein] + phosphate. It catalyses the reaction O-phospho-L-threonyl-[protein] + H2O = L-threonyl-[protein] + phosphate. Its function is as follows. Processively dephosphorylates Ser-5 of the heptad repeats YSPTSPS in the C-terminal domain of the largest RNA polymerase II subunit (rpb-1). In terms of biological role, component of the cleavage and polyadenylation factor (CPF) complex, which plays a key role in polyadenylation-dependent pre-mRNA 3'-end formation and cooperates with cleavage factors including the CFIA complex and NAB4/CFIB. Ssu-72 is required for 3'-end formation of snoRNAs. This chain is RNA polymerase II subunit A C-terminal domain phosphatase ssu-72 (ssu-72), found in Neurospora crassa (strain ATCC 24698 / 74-OR23-1A / CBS 708.71 / DSM 1257 / FGSC 987).